Here is a 666-residue protein sequence, read N- to C-terminus: DNA mismatch repair protein MutL (666 aa).

Belongs to the DNA mismatch repair MutL/HexB family.

Its function is as follows. This protein is involved in the repair of mismatches in DNA. It is required for dam-dependent methyl-directed DNA mismatch repair. May act as a 'molecular matchmaker', a protein that promotes the formation of a stable complex between two or more DNA-binding proteins in an ATP-dependent manner without itself being part of a final effector complex. The chain is DNA mismatch repair protein MutL from Clostridium botulinum (strain Loch Maree / Type A3).